The primary structure comprises 537 residues: Leucine-rich repeat LGI family member 4 (537 aa).

Residues Met1 to Ala19 form the signal peptide. LRR repeat units follow at residues Thr53 to Lys74, Ser77 to Gly98, Tyr101 to Gly122, and Ser125 to Gly146. The region spanning Asn158–Ala208 is the LRRCT domain. Residue Asn177 is glycosylated (N-linked (GlcNAc...) asparagine). 7 EAR repeats span residues Glu210–Tyr252, Arg256–Ser298, Arg302–Gly349, Gly351–Gly394, Arg396–Gly439, Met441–Ser483, and Ile487–Glu532.

Can bind to ADAM11, ADAM22 and ADAM23. Brain. Expressed in the entire developing peripheral nerves. Strongly expressed in the trigeminal nerve and ganglion and particularly abundant in the boundary cap cells - a transient population of cells that contributes to the Schwann cell population of the dorsal root nerve.

The protein resides in the secreted. Its function is as follows. Component of Schwann cell signaling pathway(s) that controls axon segregation and myelin formation. The sequence is that of Leucine-rich repeat LGI family member 4 (Lgi4) from Mus musculus (Mouse).